The following is a 581-amino-acid chain: Probable hexosyltransferase MUCI70 (581 aa).

Residues 1–58 (MTGLGVRSSSYGSLEKTGLNGVVLPIQITTTTRTKPSKMQKDREGIVHWICKFAGRKK) lie on the Cytoplasmic side of the membrane. The helical; Signal-anchor for type II membrane protein transmembrane segment at 59–79 (VGMLLLFLISAVVFLRVLYVG) threads the bilayer. The Lumenal segment spans residues 80-581 (KGEDSQEGQG…NLPVRLPDSA (502 aa)). Asn96, Asn102, Asn119, Asn194, Asn224, Asn285, Asn382, Asn411, and Asn488 each carry an N-linked (GlcNAc...) asparagine glycan. A disordered region spans residues 514 to 581 (RFARQRPPVP…NLPVRLPDSA (68 aa)). Residues 520–536 (PPVPNFPPPPPSPPPPV) show a composition bias toward pro residues. A compositionally biased stretch (basic residues) spans 553–571 (PPRRRGRDRRSGQRGHRKA).

The protein belongs to the glycosyltransferase 8 family. As to expression, expressed in siliques and seeds.

The protein localises to the golgi apparatus membrane. It participates in glycan metabolism; pectin biosynthesis. Its function is as follows. Probable glycosyltransferase involved in pectin and/or xylans biosynthesis in cell walls. Together with IRX14, required for xylan and pectin synthesis in seed coat epidermal (SCE) cells. Collaboratively with GAUT11, essential for the accumulation of seed mucilage, a gelatinous wall rich in unbranched rhamnogalacturonan I (RG I), and for shaping the surface morphology of seeds. The chain is Probable hexosyltransferase MUCI70 from Arabidopsis thaliana (Mouse-ear cress).